The primary structure comprises 173 residues: Alpha-crystallin A chain (173 aa).

Methionine 1 bears the N-acetylmethionine mark. Residues 1-63 (MDITIQHPWF…RTVLESGISE (63 aa)) form a required for complex formation with BFSP1 and BFSP2 region. Glutamine 6 bears the Deamidated glutamine; partial mark. The residue at position 45 (serine 45) is a Phosphoserine. Deamidated glutamine; partial is present on glutamine 50. In terms of domain architecture, sHSP spans 52–164 (LFRTVLESGI…SDRSIPVSRE (113 aa)). Lysine 99 carries the post-translational modification N6-acetyllysine. 3 residues coordinate Zn(2+): histidine 100, glutamate 102, and histidine 107. At serine 122 the chain carries Phosphoserine. A Deamidated asparagine; partial modification is found at asparagine 123. The segment at 144–173 (PKIHSNMESSHSDRSIPVSREEKPTLAPSS) is disordered. The segment covering 153-167 (SHSDRSIPVSREEKP) has biased composition (basic and acidic residues). Position 154 (histidine 154) interacts with Zn(2+). Serine 162 carries O-linked (GlcNAc) serine glycosylation.

Belongs to the small heat shock protein (HSP20) family. In terms of assembly, heteromer composed of three CRYAA and one CRYAB subunits. Inter-subunit bridging via zinc ions enhances stability, which is crucial as there is no protein turn over in the lens. Can also form homodimers and homotetramers (dimers of dimers) which serve as the building blocks of homooligomers. Within homooligomers, the zinc-binding motif is created from residues of 3 different molecules. His-100 and Glu-102 from one molecule are ligands of the zinc ion, and His-107 and His-154 residues from additional molecules complete the site with tetrahedral coordination geometry. Part of a complex required for lens intermediate filament formation composed of BFSP1, BFSP2 and CRYAA. Post-translationally, acetylation at Lys-99 may increase chaperone activity. Undergoes age-dependent proteolytical cleavage at the C-terminus.

It is found in the cytoplasm. The protein localises to the nucleus. Functionally, contributes to the transparency and refractive index of the lens. Acts as a chaperone, preventing aggregation of various proteins under a wide range of stress conditions. Required for the correct formation of lens intermediate filaments as part of a complex composed of BFSP1, BFSP2 and CRYAA. This is Alpha-crystallin A chain (CRYAA) from Didelphis virginiana (North American opossum).